The sequence spans 317 residues: 2,3-dihydroxyphenylpropionate/2,3-dihydroxicinnamic acid 1,2-dioxygenase 2 (317 aa).

Catalysis depends on histidine 115, which acts as the Proton donor. The active-site Proton acceptor is histidine 179.

It belongs to the LigB/MhpB extradiol dioxygenase family. As to quaternary structure, homotetramer. The cofactor is Fe(2+).

The catalysed reaction is 3-(2,3-dihydroxyphenyl)propanoate + O2 = (2Z,4E)-2-hydroxy-6-oxonona-2,4-dienedioate + H(+). It carries out the reaction (2E)-3-(2,3-dihydroxyphenyl)prop-2-enoate + O2 = (2Z,4E,7E)-2-hydroxy-6-oxonona-2,4,7-trienedioate + H(+). It participates in aromatic compound metabolism; 3-phenylpropanoate degradation. Catalyzes the non-heme iron(II)-dependent oxidative cleavage of 2,3-dihydroxyphenylpropionic acid and 2,3-dihydroxicinnamic acid into 2-hydroxy-6-ketononadienedioate and 2-hydroxy-6-ketononatrienedioate, respectively. The protein is 2,3-dihydroxyphenylpropionate/2,3-dihydroxicinnamic acid 1,2-dioxygenase 2 of Dechloromonas aromatica (strain RCB).